Consider the following 196-residue polypeptide: MSFVVIITGIPGVGKSTITRLALQRTKAKFKLINFGDLMFEEAVKAGLVNHRDEMRKLPLEIQRDLQMKVAKKISEMARQQPILLDTHATIKTPHGYLLGLPYEVIKTLNPNFIVIIEATPSEILGRRLRDLKRDRDVETEEQIQRHQDLNRAAAIAYAMHSNALIKIIENHEDKGLEEAVNELVEILDLAVKEYA.

9-17 is an ATP binding site; the sequence is GIPGVGKST.

It belongs to the archaeal adenylate kinase family.

The protein resides in the cytoplasm. It carries out the reaction AMP + ATP = 2 ADP. In Pyrococcus abyssi (strain GE5 / Orsay), this protein is Adenylate kinase (adkA).